Reading from the N-terminus, the 140-residue chain is MSRFLNVLRSWLVMVSIIAMGNTLQSFRDHTFLYEKLYTGKPNLVNGLQARTFGIWTLLSSVIRCLCAIDIHNKTLYHITLWTFLLALGHFLSELFVYGTAAPTIGVLAPLMVASFSILGMLVGLRYLEVEPVSRQKKRN.

Transmembrane regions (helical) follow at residues 4-24, 52-72, 79-99, and 105-125; these read FLNV…GNTL, TFGI…IDIH, ITLW…FVYG, and IGVL…LVGL.

The protein belongs to the ERG28 family. In terms of tissue distribution, ubiquitous; strongly expressed in testis and some cancer cell lines.

The protein resides in the endoplasmic reticulum membrane. The chain is Ergosterol biosynthetic protein 28 homolog from Homo sapiens (Human).